A 258-amino-acid polypeptide reads, in one-letter code: Indole-3-glycerol phosphate synthase (258 aa).

Belongs to the TrpC family.

It catalyses the reaction 1-(2-carboxyphenylamino)-1-deoxy-D-ribulose 5-phosphate + H(+) = (1S,2R)-1-C-(indol-3-yl)glycerol 3-phosphate + CO2 + H2O. It participates in amino-acid biosynthesis; L-tryptophan biosynthesis; L-tryptophan from chorismate: step 4/5. This is Indole-3-glycerol phosphate synthase from Endomicrobium trichonymphae.